Reading from the N-terminus, the 165-residue chain is MKSIYITGYMGAGKTTIGKALSKELHMDVIDTDQKIEEKQEKEIRDIFAEEGEMAFREYESEMLRSLPVENVIITTGGGIIEREENRKWMKENGTVVYLYCDPHVIAERLREDTTRPLFQKKDIDAFVMKFELRRAYYEEAHIHIDTTNKSVKQIMDELKEKINE.

Gly11–Thr16 is a binding site for ATP. Thr15 lines the Mg(2+) pocket. Residues Asp33, Arg57, and Gly78 each contribute to the substrate site. ATP is bound at residue Arg116. Arg134 is a binding site for substrate.

It belongs to the shikimate kinase family. As to quaternary structure, monomer. Mg(2+) is required as a cofactor.

It localises to the cytoplasm. The catalysed reaction is shikimate + ATP = 3-phosphoshikimate + ADP + H(+). It functions in the pathway metabolic intermediate biosynthesis; chorismate biosynthesis; chorismate from D-erythrose 4-phosphate and phosphoenolpyruvate: step 5/7. In terms of biological role, catalyzes the specific phosphorylation of the 3-hydroxyl group of shikimic acid using ATP as a cosubstrate. This is Shikimate kinase from Bacillus cereus (strain AH187).